The following is a 537-amino-acid chain: Cytochrome bd ubiquinol oxidase subunit 1 (537 aa).

Residues 1–24 (MISESVVDLSRLQFAMTALYHFLF) are Cytoplasmic-facing. His21 serves as a coordination point for heme b. A helical transmembrane segment spans residues 25–44 (VPLTLGMTFLLAIMESVYVM). Residues 45-96 (TGKQVYKDMVKFWGKLFGINFALGVTTGITMEFQFGTNWAYYSHYVGDIFGA) lie on the Periplasmic side of the membrane. Residues 97–116 (PLAIEGLTAFFLESTFIGMF) traverse the membrane as a helical segment. The Cytoplasmic segment spans residues 117-131 (FFGWDRLSKIQHLAV). A helical membrane pass occupies residues 132–151 (TWLVALGSNLSALWILVANG). The Periplasmic segment spans residues 152–189 (WMQHPVGAEFNFETMRMELVDFGALLLNPVAQVKFVHT). His188 provides a ligand contact to heme b. The chain crosses the membrane as a helical span at residues 190–209 (VASGYVTGAVFVLAISSYYL). Over 210-221 (LKKRDLGFARRS) the chain is Cytoplasmic. Residues 222-241 (FAIASAFGMASILSVIVLGD) form a helical membrane-spanning segment. At 242 to 394 (ESGYEVGEVQ…VASMFWSFRA (153 aa)) the chain is on the periplasmic side. Heme b is bound at residue Met395. Residues 395 to 414 (MVGAGFAMLILFVCAFWASA) form a helical membrane-spanning segment. The Cytoplasmic segment spans residues 415–472 (RKNEESKPWLLKFALYSLPLPWIATQTGWFVAEHGRQPWTIGGVLPTHLSASSLSTGD). Residues 473–492 (LWGSLIALIAFYTLLLVVEM) form a helical membrane-spanning segment. Over 493-537 (YLMIRFARLGPSSLHTGRYHFEQLEQHAVKHASPSQADPQQPVNA) the chain is Periplasmic.

It belongs to the cytochrome ubiquinol oxidase subunit 1 family. In terms of assembly, heterodimer of subunits I and II. Requires heme b as cofactor. Heme d cis-diol is required as a cofactor.

Its subcellular location is the cell inner membrane. The enzyme catalyses 2 a ubiquinol + O2(in) + 4 H(+)(in) = 2 a ubiquinone + 2 H2O(in) + 4 H(+)(out). Functionally, may be involved in maintaining the low intracellular oxygen concentration required for nitrogen fixation. The sequence is that of Cytochrome bd ubiquinol oxidase subunit 1 (cydA) from Azotobacter vinelandii.